The chain runs to 410 residues: Peptidase T (410 aa).

His-79 is a Zn(2+) binding site. Asp-81 is an active-site residue. Position 142 (Asp-142) interacts with Zn(2+). The active-site Proton acceptor is Glu-176. Glu-177, Asp-199, and His-381 together coordinate Zn(2+).

It belongs to the peptidase M20B family. It depends on Zn(2+) as a cofactor.

The protein resides in the cytoplasm. The catalysed reaction is Release of the N-terminal residue from a tripeptide.. Functionally, cleaves the N-terminal amino acid of tripeptides. This chain is Peptidase T, found in Bacillus cereus (strain B4264).